The following is a 960-amino-acid chain: Vacuolar membrane protease (960 aa).

Residues 1–57 (MADNNSSSGSLVIDEQDYDVHEAGQQGQQGQQKHQQRQQERPSLITRVFRSVFGYRK) lie on the Cytoplasmic side of the membrane. The disordered stretch occupies residues 22–41 (EAGQQGQQGQQKHQQRQQER). Positions 24 to 33 (GQQGQQGQQK) are enriched in low complexity. Residues 58–78 (TSLSLFVVATIALCVSLSYID) form a helical membrane-spanning segment. Residues 79 to 401 (NSVDFISFPT…FTISTSQLFK (323 aa)) lie on the Vacuolar side of the membrane. Residue Asn-148 is glycosylated (N-linked (GlcNAc...) asparagine). Residues His-189 and Asp-201 each contribute to the Zn(2+) site. The active-site Proton acceptor is Glu-235. Residues Glu-236, Glu-261, and His-333 each contribute to the Zn(2+) site. Residues 402–422 (INVALLTVFPILNGLLLLYTI) traverse the membrane as a helical segment. Residues 423-432 (RSRKWQVSFS) lie on the Cytoplasmic side of the membrane. The chain crosses the membrane as a helical span at residues 433–453 (SAISIPVALLVTMFIVVYLVV). The Vacuolar segment spans residues 454-476 (ESYKSFNQYLPSSRPLLLVATIT). A helical transmembrane segment spans residues 477–497 (SILLLVFSIILVAFSFFSIIA). The Cytoplasmic portion of the chain corresponds to 498-502 (EENLR). Residues 503–523 (LLAIVELSFAYWVGLAFTTHG) traverse the membrane as a helical segment. The Vacuolar segment spans residues 524-535 (LSGAESARHSGE). Residues 536–556 (FAVSILFTLEAVASFLGLIGW) traverse the membrane as a helical segment. Topologically, residues 557 to 635 (SLCRNRSHLQ…FGYDWSLQYL (79 aa)) are cytoplasmic. A compositionally biased stretch (basic and acidic residues) spans 587-605 (NDHDHEHRHGHEDNEHGEA). Positions 587–614 (NDHDHEHRHGHEDNEHGEAHVQQQSQSR) are disordered. The helical transmembrane segment at 636–656 (ITVPLSIFIIYNSGWLVLEGV) threads the bilayer. A glycan (N-linked (GlcNAc...) asparagine) is linked at Asn-657. Over 657-668 (NKTLQESAKAET) the chain is Vacuolar. Residues 669–689 (FVYNLLWIVSVSLVLPLIPFA) traverse the membrane as a helical segment. Residues 690 to 696 (GKLNRYM) are Cytoplasmic-facing. The chain crosses the membrane as a helical span at residues 697–717 (VFVLIAIGVLGTLLVHVVQPF). Residues 718-960 (NEANPLKLRF…LVAYTKQVHV (243 aa)) lie on the Vacuolar side of the membrane. Residues Asn-736, Asn-763, Asn-803, Asn-875, and Asn-921 are each glycosylated (N-linked (GlcNAc...) asparagine).

It belongs to the peptidase M28 family. The cofactor is Zn(2+).

It is found in the vacuole membrane. Its function is as follows. May be involved in vacuolar sorting and osmoregulation. The sequence is that of Vacuolar membrane protease from Lodderomyces elongisporus (strain ATCC 11503 / CBS 2605 / JCM 1781 / NBRC 1676 / NRRL YB-4239) (Yeast).